We begin with the raw amino-acid sequence, 298 residues long: Protoheme IX farnesyltransferase (298 aa).

The next 9 membrane-spanning stretches (helical) occupy residues 28–48 (VVAL…EELV), 50–70 (LKVL…AAAI), 95–117 (LSPA…TLYA), 121–138 (PLTA…AVVY), 149–169 (NIVI…TSVT), 176–196 (AVLL…ALAV), 222–242 (CIFL…LIGM), 243–263 (TGMI…AYAW), and 274–294 (AFNM…ILLV).

This sequence belongs to the UbiA prenyltransferase family. Protoheme IX farnesyltransferase subfamily.

The protein resides in the cell inner membrane. It catalyses the reaction heme b + (2E,6E)-farnesyl diphosphate + H2O = Fe(II)-heme o + diphosphate. It functions in the pathway porphyrin-containing compound metabolism; heme O biosynthesis; heme O from protoheme: step 1/1. In terms of biological role, converts heme B (protoheme IX) to heme O by substitution of the vinyl group on carbon 2 of heme B porphyrin ring with a hydroxyethyl farnesyl side group. The protein is Protoheme IX farnesyltransferase of Idiomarina loihiensis (strain ATCC BAA-735 / DSM 15497 / L2-TR).